The chain runs to 59 residues: Large ribosomal subunit protein bL32c (59 aa).

It belongs to the bacterial ribosomal protein bL32 family.

The protein resides in the plastid. It is found in the chloroplast. This Physcomitrium patens (Spreading-leaved earth moss) protein is Large ribosomal subunit protein bL32c.